Here is a 525-residue protein sequence, read N- to C-terminus: GMP synthase [glutamine-hydrolyzing] (525 aa).

In terms of domain architecture, Glutamine amidotransferase type-1 spans 12–203 (TVLVVDFGAQ…LYRGAGLTPS (192 aa)). The active-site Nucleophile is Cys-89. Active-site residues include His-177 and Glu-179. Positions 204-399 (WTTGNVIDEQ…LGLPDEIVQR (196 aa)) constitute a GMPS ATP-PPase domain. 231–237 (SGGVDSA) serves as a coordination point for ATP.

In terms of assembly, homodimer.

The catalysed reaction is XMP + L-glutamine + ATP + H2O = GMP + L-glutamate + AMP + diphosphate + 2 H(+). It participates in purine metabolism; GMP biosynthesis; GMP from XMP (L-Gln route): step 1/1. Functionally, catalyzes the synthesis of GMP from XMP. The chain is GMP synthase [glutamine-hydrolyzing] from Streptomyces avermitilis (strain ATCC 31267 / DSM 46492 / JCM 5070 / NBRC 14893 / NCIMB 12804 / NRRL 8165 / MA-4680).